Consider the following 255-residue polypeptide: Triosephosphate isomerase (255 aa).

Substrate is bound at residue 10-12 (NWK). The active-site Electrophile is His-96. Glu-168 acts as the Proton acceptor in catalysis. Substrate is bound by residues Gly-174, Ser-213, and 234-235 (GG).

This sequence belongs to the triosephosphate isomerase family. Homodimer.

It is found in the cytoplasm. The catalysed reaction is D-glyceraldehyde 3-phosphate = dihydroxyacetone phosphate. It functions in the pathway carbohydrate biosynthesis; gluconeogenesis. The protein operates within carbohydrate degradation; glycolysis; D-glyceraldehyde 3-phosphate from glycerone phosphate: step 1/1. Its function is as follows. Involved in the gluconeogenesis. Catalyzes stereospecifically the conversion of dihydroxyacetone phosphate (DHAP) to D-glyceraldehyde-3-phosphate (G3P). This Histophilus somni (strain 129Pt) (Haemophilus somnus) protein is Triosephosphate isomerase.